A 408-amino-acid polypeptide reads, in one-letter code: Broad specificity amino-acid racemase (408 aa).

The signal sequence occupies residues 1 to 24 (MNFKKTLLSIAIASASLTPAFSYS). Cysteine 71 and cysteine 97 are disulfide-bonded. Residue lysine 75 is the Proton acceptor of the active site. An N6-(pyridoxal phosphate)lysine modification is found at lysine 75. Arginine 174 serves as a coordination point for substrate. Residue tyrosine 300 is the Proton acceptor of the active site. Methionine 348 serves as a coordination point for substrate.

It belongs to the alanine racemase family. Bsr subfamily. The cofactor is pyridoxal 5'-phosphate.

It is found in the periplasm. The catalysed reaction is an L-alpha-amino acid = a D-alpha-amino acid. It catalyses the reaction L-lysine = D-lysine. It carries out the reaction L-arginine = D-arginine. In terms of biological role, amino-acid racemase able to utilize a broad range of substrates. The protein is Broad specificity amino-acid racemase (alr) of Vibrio vulnificus (strain CMCP6).